A 223-amino-acid polypeptide reads, in one-letter code: N-terminal Xaa-Pro-Lys N-methyltransferase 1 (223 aa).

S-adenosyl-L-methionine contacts are provided by residues glycine 69, arginine 74, 91 to 93 (DVT), 119 to 120 (LQ), and glutamine 135.

This sequence belongs to the methyltransferase superfamily. NTM1 family.

The protein resides in the nucleus. The enzyme catalyses N-terminal L-alanyl-L-prolyl-L-lysyl-[protein] + 3 S-adenosyl-L-methionine = N-terminal N,N,N-trimethyl-L-alanyl-L-prolyl-L-lysyl-[protein] + 3 S-adenosyl-L-homocysteine + 3 H(+). It carries out the reaction N-terminal L-seryl-L-prolyl-L-lysyl-[protein] + 3 S-adenosyl-L-methionine = N-terminal N,N,N-trimethyl-L-seryl-L-prolyl-L-lysyl-[protein] + 3 S-adenosyl-L-homocysteine + 3 H(+). It catalyses the reaction N-terminal L-prolyl-L-prolyl-L-lysyl-[protein] + 2 S-adenosyl-L-methionine = N-terminal N,N-dimethyl-L-prolyl-L-prolyl-L-lysyl-[protein] + 2 S-adenosyl-L-homocysteine + 2 H(+). Functionally, distributive alpha-N-methyltransferase that methylates the N-terminus of target proteins containing the N-terminal motif [Ala/Gly/Pro/Ser]-Pro-Lys when the initiator Met is cleaved. Specifically catalyzes mono-, di- or tri-methylation of the exposed alpha-amino group of the Ala, Gly or Ser residue in the [Ala/Gly/Ser]-Pro-Lys motif and mono- or di-methylation of Pro in the Pro-Pro-Lys motif. Required during mitosis for normal bipolar spindle formation and chromosome segregation via its action on target proteins. The polypeptide is N-terminal Xaa-Pro-Lys N-methyltransferase 1 (ntmt1) (Danio rerio (Zebrafish)).